The chain runs to 94 residues: Co-chaperonin GroES (94 aa).

The protein belongs to the GroES chaperonin family. As to quaternary structure, heptamer of 7 subunits arranged in a ring. Interacts with the chaperonin GroEL.

It localises to the cytoplasm. Together with the chaperonin GroEL, plays an essential role in assisting protein folding. The GroEL-GroES system forms a nano-cage that allows encapsulation of the non-native substrate proteins and provides a physical environment optimized to promote and accelerate protein folding. GroES binds to the apical surface of the GroEL ring, thereby capping the opening of the GroEL channel. The chain is Co-chaperonin GroES from Alkaliphilus metalliredigens (strain QYMF).